The primary structure comprises 137 residues: Partner of bursicon (137 aa).

The N-terminal stretch at 1–24 is a signal peptide; sequence MNIMITKIFFLVQLFYIVVSKSSA. 5 disulfides stabilise this stretch: Cys-28/Cys-86, Cys-52/Cys-101, Cys-61/Cys-127, Cys-65/Cys-129, and Cys-83/Cys-132. Residues 28-123 enclose the CTCK domain; sequence CETVASEVHV…NALMEVRLRE (96 aa).

In terms of assembly, heterodimer of burs and pburs.

It localises to the secreted. Its function is as follows. Final heterodimeric neurohormone released at the end of the molting cycle, involved in the sclerotization (tanning) of the insect cuticle, melanization and wing spreading. The protein is Partner of bursicon of Bombyx mori (Silk moth).